Here is a 404-residue protein sequence, read N- to C-terminus: MAESVERLQQRVQELERELAQERSLQVPRSGDGGGGRVRIEKMSSEVVDSNPYSRLMALKRMGIVSDYEKIRTFAVAIVGVGGVGSVTAEMLTRCGIGKLLLFDYDKVELANMNRLFFQPHQAGLSKVQAAEHTLRNINPDVLFEVHNYNITTVENFQHFMDRISNGGLEEGKPVDLVLSCVDNFEARMTINTACNELGQTWMESGVSENAVSGHIQLIIPGESACFACAPPLVVAANIDEKTLKREGVCAASLPTTMGVVAGILVQNVLKFLLNFGTVSFYLGYNAMQDFFPTMSMKPNPQCDDRNCRKQQEEYKKKVAALPKQEVIQEEEEIIHEDNEWGIELVSEVSEEELKNFSGPVPDLPEGITVAYTIPKKQEDSVTELTVEDSGESLEDLMAKMKNM.

A Phosphoserine modification is found at Ser-45. Gly-83, Asp-104, Lys-127, Asn-150, and Asn-184 together coordinate ATP. The Zn(2+) site is built by Cys-226 and Cys-229. Catalysis depends on Cys-250, which acts as the Glycyl thioester intermediate. Residues Cys-303 and Cys-308 each coordinate Zn(2+). The short motif at 334-346 (IIHEDNEWGIELV) is the UFM1-interacting sequence (UIS) element. A linker region spans residues 347–377 (SEVSEEELKNFSGPVPDLPEGITVAYTIPKK). A phosphoserine mark is found at Ser-358 and Ser-393. A UFC1-binding sequence (UFC) motif is present at residues 389–404 (DSGESLEDLMAKMKNM).

This sequence belongs to the ubiquitin-activating E1 family. UBA5 subfamily. In terms of assembly, homodimer; homodimerization is required for UFM1 activation. Interacts (via UIS motif) with UFM1; binds UFM1 via a trans-binding mechanism in which UFM1 interacts with distinct sites in both subunits of the UBA5 homodimer. Interacts (via C-terminus) with UFC1. Interacts (via UIS motif) with GABARAPL2 and, with lower affinity, with GABARAP and GABARAPL1. Widely expressed.

It localises to the cytoplasm. The protein localises to the nucleus. The protein resides in the endoplasmic reticulum membrane. It is found in the golgi apparatus. In terms of biological role, E1-like enzyme which specifically catalyzes the first step in ufmylation. Activates UFM1 by first adenylating its C-terminal glycine residue with ATP, and thereafter linking this residue to the side chain of a cysteine residue in E1, yielding a UFM1-E1 thioester and free AMP. Activates UFM1 via a trans-binding mechanism, in which UFM1 interacts with distinct sites in both subunits of the UBA5 homodimer. Trans-binding also promotes stabilization of the UBA5 homodimer, and enhances ATP-binding. Transfer of UFM1 from UBA5 to the E2-like enzyme UFC1 also takes place using a trans mechanism. Ufmylation plays a key role in various processes, such as ribosome recycling, response to DNA damage, interferon response or reticulophagy (also called ER-phagy). Ufmylation is essential for erythroid differentiation of both megakaryocytes and erythrocytes. The sequence is that of Ubiquitin-like modifier-activating enzyme 5 from Homo sapiens (Human).